We begin with the raw amino-acid sequence, 228 residues long: Ras-related protein Rab-33B (228 aa).

Positions 41, 42, 43, 44, 45, 46, 60, and 63 each coordinate GTP. T45 serves as a coordination point for Mg(2+). Residues G54–V66 carry the Switch 1 motif. 2 residues coordinate Mg(2+): T63 and D86. Positions T87–H106 match the Switch 2 motif. GTP is bound by residues G89, N146, K147, D149, A177, and K178. Residues C226 and C228 are each lipidated (S-geranylgeranyl cysteine). Residue C228 is modified to Cysteine methyl ester.

The protein belongs to the small GTPase superfamily. Rab family. Interacts (GTP- and GDP-bound forms) with ATG16L1; the complex consists of a tetramer where two RAB33B molecules bind independently one molecule of the ATG16L1 homodimer; the interaction promotes ATG12-ATG5-ATG16L1 complex recruitment to phagophores. Interacts with ATG16L2; however interaction is approximately hundred times lower than for ATG16L1. Interacts with RIC1 (via C-terminus domain); the interaction is direct with a preference for RAB33B-GTP. Interacts with RGP1. Mg(2+) is required as a cofactor.

The protein resides in the golgi apparatus membrane. Its subcellular location is the golgi apparatus. It localises to the cis-Golgi network. The protein localises to the preautophagosomal structure membrane. It catalyses the reaction GTP + H2O = GDP + phosphate + H(+). Its activity is regulated as follows. Regulated by guanine nucleotide exchange factors (GEFs) which promote the exchange of bound GDP for free GTP. Regulated by GTPase activating proteins (GAPs) such as SGSM2 which increase the GTP hydrolysis activity. Inhibited by GDP dissociation inhibitors (GDIs). In terms of biological role, the small GTPases Rab are key regulators of intracellular membrane trafficking, from the formation of transport vesicles to their fusion with membranes. Rabs cycle between an inactive GDP-bound form and an active GTP-bound form that is able to recruit to membranes different sets of downstream effectors directly responsible for vesicle formation, movement, tethering and fusion. RAB33B acts, in coordination with RAB6A, to regulate intra-Golgi retrograde trafficking. Participates in autophagosome formation by recruiting the ATG12-ATG5-ATG16L1 complex to phagophores, probably in a nucleotide-independent manner. The chain is Ras-related protein Rab-33B (RAB33B) from Gallus gallus (Chicken).